We begin with the raw amino-acid sequence, 465 residues long: WAS protein family homolog 2 (465 aa).

The required for WASH complex assembly stretch occupies residues 1–54 (MTPVRMQHSLAGQTYAVPLIQPDLRREEAVQQMADALQYLQKVSGDIFSRISQQ). The tract at residues 1–167 (MTPVRMQHSL…EGLGGLPSNI (167 aa)) is WHD1. Lysine 220 participates in a covalent cross-link: Glycyl lysine isopeptide (Lys-Gly) (interchain with G-Cter in ubiquitin). 2 disordered regions span residues 297-407 (QDGV…QGGH) and 422-465 (GISG…DWES). Residues 302-314 (TPPPPPPPPPPAP) are compositionally biased toward pro residues. The tract at residues 349-465 (QGAPREVVDP…AEEDEDDWES (117 aa)) is VCA. A WH2 domain is found at 361–383 (GRATLLESIRQAGGIGKAKLRSM). The segment covering 382-398 (SMKERKLEKKKQKEQEQ) has biased composition (basic and acidic residues). Residues 424 to 436 (SGKGPGAGEGPGG) are compositionally biased toward gly residues. Acidic residues predominate over residues 456–465 (AEEDEDDWES).

This sequence belongs to the WASH1 family. In terms of assembly, component of the WASH core complex also described as WASH regulatory complex (SHRC) composed of WASH (WASHC1, WASH2P or WASH3P), WASHC2 (WASHC2A or WASHC2C), WASHC3, WASHC4 and WASHC5. The WASH core complex associates with the F-actin-capping protein dimer (formed by CAPZA1, CAPZA2 or CAPZA3 and CAPZB) in a transient or substoichiometric manner which was initially described as WASH complex. Interacts (via WHD1 region) with WASHC2C; the interaction is direct. Interacts with alpha-tubulin. Interacts with BECN1; WASHC1 and AMBRA1 can competitively interact with BECN1. Interacts with BLOC1S2; may associate with the BLOC-1 complex. Interacts with tubulin gamma chain (TUBG1 or TUBG2). Interacts with EXOC1, EXOC4, EXOC8; in MMP14-positive endosomes in breast tumor cells; indicative for an association with the exocyst complex.

Its subcellular location is the early endosome membrane. The protein localises to the recycling endosome membrane. It is found in the late endosome. The protein resides in the cytoplasmic vesicle. It localises to the autophagosome. Its subcellular location is the cytoplasm. The protein localises to the cytoskeleton. It is found in the microtubule organizing center. The protein resides in the centrosome. It localises to the centriole. Functionally, acts as a nucleation-promoting factor at the surface of endosomes, where it recruits and activates the Arp2/3 complex to induce actin polymerization, playing a key role in the fission of tubules that serve as transport intermediates during endosome sorting. Involved in endocytic trafficking of EGF. Involved in transferrin receptor recycling. Regulates the trafficking of endosomal alpha5beta1 integrin to the plasma membrane and involved in invasive cell migration. In T-cells involved in endosome-to-membrane recycling of receptors including T-cell receptor (TCR), CD28 and ITGAL; proposed to be implicated in T-cell proliferation and effector function. In dendritic cells involved in endosome-to-membrane recycling of major histocompatibility complex (MHC) class II probably involving retromer and subsequently allowing antigen sampling, loading and presentation during T-cell activation. Involved in Arp2/3 complex-dependent actin assembly driving Salmonella typhimurium invasion independent of ruffling. Involved in the exocytosis of MMP14 leading to matrix remodeling during invasive migration and implicating late endosome-to-plasma membrane tubular connections and cooperation with the exocyst complex. Involved in negative regulation of autophagy independently from its role in endosomal sorting by inhibiting BECN1 ubiquitination to inactivate PIK3C3/Vps34 activity. The chain is WAS protein family homolog 2 (WASH2P) from Homo sapiens (Human).